The following is a 93-amino-acid chain: UPF0250 protein PSPA7_1111 (93 aa).

It belongs to the UPF0250 family.

This Pseudomonas paraeruginosa (strain DSM 24068 / PA7) (Pseudomonas aeruginosa (strain PA7)) protein is UPF0250 protein PSPA7_1111.